The sequence spans 292 residues: Protein/nucleic acid deglycase HchA (292 aa).

Over residues 1 to 12 the composition is skewed to polar residues; that stretch reads MSQDVNKLSKQP. The segment at 1-23 is disordered; sequence MSQDVNKLSKQPTPDKAEDNAFF. Cys190 (nucleophile) is an active-site residue.

This sequence belongs to the peptidase C56 family. HchA subfamily.

Its subcellular location is the cytoplasm. It carries out the reaction N(omega)-(1-hydroxy-2-oxopropyl)-L-arginyl-[protein] + H2O = lactate + L-arginyl-[protein] + H(+). The enzyme catalyses N(6)-(1-hydroxy-2-oxopropyl)-L-lysyl-[protein] + H2O = lactate + L-lysyl-[protein] + H(+). It catalyses the reaction S-(1-hydroxy-2-oxopropyl)-L-cysteinyl-[protein] + H2O = lactate + L-cysteinyl-[protein] + H(+). The catalysed reaction is N(omega)-(1-hydroxy-2-oxoethyl)-L-arginyl-[protein] + H2O = L-arginyl-[protein] + glycolate + H(+). It carries out the reaction N(6)-(1-hydroxy-2-oxoethyl)-L-lysyl-[protein] + H2O = glycolate + L-lysyl-[protein] + H(+). The enzyme catalyses S-(1-hydroxy-2-oxoethyl)-L-cysteinyl-[protein] + H2O = glycolate + L-cysteinyl-[protein] + H(+). It catalyses the reaction N(2)-(1-hydroxy-2-oxopropyl)-dGTP + H2O = lactate + dGTP + H(+). The catalysed reaction is N(2)-(1-hydroxy-2-oxopropyl)-GTP + H2O = lactate + GTP + H(+). It carries out the reaction N(2)-(1-hydroxy-2-oxopropyl)-GDP + H2O = lactate + GDP + H(+). The enzyme catalyses N(2)-(1-hydroxy-2-oxopropyl)-GMP + H2O = lactate + GMP + H(+). It catalyses the reaction N(2)-(1-hydroxy-2-oxoethyl)-dGTP + H2O = dGTP + glycolate + H(+). The catalysed reaction is N(2)-(1-hydroxy-2-oxoethyl)-GTP + H2O = glycolate + GTP + H(+). It carries out the reaction N(2)-(1-hydroxy-2-oxoethyl)-GDP + H2O = glycolate + GDP + H(+). The enzyme catalyses N(2)-(1-hydroxy-2-oxoethyl)-GMP + H2O = glycolate + GMP + H(+). It catalyses the reaction an N(2)-(1-hydroxy-2-oxopropyl)-guanosine in RNA + H2O = a guanosine in RNA + lactate + H(+). The catalysed reaction is an N(2)-(1-hydroxy-2-oxopropyl)-2'-deoxyguanosine in DNA + H2O = a 2'-deoxyguanosine in DNA + lactate + H(+). It carries out the reaction an N(2)-(1-hydroxy-2-oxoethyl)-guanosine in RNA + H2O = a guanosine in RNA + glycolate + H(+). The enzyme catalyses an N(2)-(1-hydroxy-2-oxoethyl)-2'-deoxyguanosine in DNA + H2O = a 2'-deoxyguanosine in DNA + glycolate + H(+). Functionally, protein and nucleotide deglycase that catalyzes the deglycation of the Maillard adducts formed between amino groups of proteins or nucleotides and reactive carbonyl groups of glyoxals. Thus, functions as a protein deglycase that repairs methylglyoxal- and glyoxal-glycated proteins, and releases repaired proteins and lactate or glycolate, respectively. Deglycates cysteine, arginine and lysine residues in proteins, and thus reactivates these proteins by reversing glycation by glyoxals. Acts on early glycation intermediates (hemithioacetals and aminocarbinols), preventing the formation of Schiff bases and advanced glycation endproducts (AGE). Also functions as a nucleotide deglycase able to repair glycated guanine in the free nucleotide pool (GTP, GDP, GMP, dGTP) and in DNA and RNA. Is thus involved in a major nucleotide repair system named guanine glycation repair (GG repair), dedicated to reversing methylglyoxal and glyoxal damage via nucleotide sanitization and direct nucleic acid repair. Plays an important role in protecting cells from carbonyl stress. In Staphylococcus aureus (strain MRSA252), this protein is Protein/nucleic acid deglycase HchA.